The sequence spans 228 residues: Urease accessory protein UreF (228 aa).

The protein belongs to the UreF family. UreD, UreF and UreG form a complex that acts as a GTP-hydrolysis-dependent molecular chaperone, activating the urease apoprotein by helping to assemble the nickel containing metallocenter of UreC. The UreE protein probably delivers the nickel.

The protein resides in the cytoplasm. In terms of biological role, required for maturation of urease via the functional incorporation of the urease nickel metallocenter. The sequence is that of Urease accessory protein UreF from Alkalilimnicola ehrlichii (strain ATCC BAA-1101 / DSM 17681 / MLHE-1).